The chain runs to 468 residues: Zinc finger CCCH domain-containing protein 32 (468 aa).

A disordered region spans residues 1–25 (MYARNPPLNGSQSAQAPDWTPADAD). C3H1-type zinc fingers lie at residues 45-73 (RPGA…HPRD), 90-118 (RFGE…HPKN), 136-164 (REGD…HPQP), 289-317 (RPGE…HPRD), and 335-363 (RPGV…HPMG).

It localises to the nucleus. This is Zinc finger CCCH domain-containing protein 32 from Arabidopsis thaliana (Mouse-ear cress).